An 85-amino-acid polypeptide reads, in one-letter code: Insecticidal toxin Vn1 (85 aa).

The signal sequence occupies residues 1–23 (MFLYRLICLFILICIITVDISTS). Cys71 and Cys84 are joined by a disulfide.

In terms of tissue distribution, highly expressed in the venom apparatus, and weakly expressed in residual body.

Its subcellular location is the secreted. Functionally, endoparasitoid venom toxin that exhibits insecticidal activity against Tenebrio molitor pupae. Impacts genes related to immune response, environmental information processing, metabolism, and response to external stimuli in T.molitor, suggesting its involvement in the intricate parasitoid wasp-host interaction. This is Insecticidal toxin Vn1 from Aphidius gifuensis (Parasitoid wasp).